Reading from the N-terminus, the 564-residue chain is Proline--tRNA ligase (564 aa).

Belongs to the class-II aminoacyl-tRNA synthetase family. ProS type 1 subfamily. In terms of assembly, homodimer.

The protein localises to the cytoplasm. The catalysed reaction is tRNA(Pro) + L-proline + ATP = L-prolyl-tRNA(Pro) + AMP + diphosphate. Catalyzes the attachment of proline to tRNA(Pro) in a two-step reaction: proline is first activated by ATP to form Pro-AMP and then transferred to the acceptor end of tRNA(Pro). As ProRS can inadvertently accommodate and process non-cognate amino acids such as alanine and cysteine, to avoid such errors it has two additional distinct editing activities against alanine. One activity is designated as 'pretransfer' editing and involves the tRNA(Pro)-independent hydrolysis of activated Ala-AMP. The other activity is designated 'posttransfer' editing and involves deacylation of mischarged Ala-tRNA(Pro). The misacylated Cys-tRNA(Pro) is not edited by ProRS. The sequence is that of Proline--tRNA ligase from Xanthomonas campestris pv. campestris (strain 8004).